Consider the following 2633-residue polypeptide: Non-reducing polyketide synthase sor2 (2633 aa).

The N-terminal acylcarrier protein transacylase domain (SAT) stretch occupies residues 67-237; sequence VSNAQKLAEW…TTSTRTVAAL (171 aa). Catalysis depends on Cys140, which acts as the Nucleophile; for transacylase activity. His258 acts as the Proton donor/acceptor; for transacylase activity in catalysis. Residues 389–814 form the Ketosynthase family 3 (KS3) domain; sequence ENDIAVIGMA…GSNASVIIKQ (426 aa). Active-site for beta-ketoacyl synthase activity residues include Cys561, His696, and His737. Residues 928-1239 form a malonyl-CoA:ACP transacylase (MAT) domain region; it reads CFGGQVSTFV…SKASSQLSDV (312 aa). The interval 1307 to 1437 is N-terminal hotdog fold; that stretch reads PQPVGLYTLL…GQLHFQASDD (131 aa). In terms of domain architecture, PKS/mFAS DH spans 1307–1627; it reads PQPVGLYTLL…YAPVSLDQLF (321 aa). Residues 1338–1509 are product template (PT) domain; sequence MSDHAIGKAQ…SNESAGRLVR (172 aa). Residues 1464 to 1627 form a C-terminal hotdog fold region; it reads GRSDEVIQGQ…YAPVSLDQLF (164 aa). The Carrier domain occupies 1684–1758; it reads EELWLRLRPV…GILKFLQSTL (75 aa). At Ser1718 the chain carries O-(pantetheine 4'-phosphoryl)serine. A disordered region spans residues 1762–1792; sequence DVHDSSETMSTVSSDGNVHSPPTSGSEMASP. Residues 1768-1790 show a composition bias toward polar residues; it reads ETMSTVSSDGNVHSPPTSGSEMA. A methyltransferase domain region spans residues 1982-2166; it reads FELMADFLTR…ASGFKHVRWT (185 aa). Residues 2253–2495 are NADPH-binding (R) domain; the sequence is VTGATGSLGS…TLRALPDVDG (243 aa).

Pantetheine 4'-phosphate serves as cofactor.

It functions in the pathway secondary metabolite biosynthesis. Non-reducing polyketide synthase; part of the SOR gene cluster that mediates the biosynthesis of sorbicillinoids, a diverse group of yellow secondary metabolites that restrict growth of competing pathogenic fungi but not of bacteria. Sorbicillinoids biosynthesis requires the action of two PKSs. The SOR cluster is required for the production of trichodimerol and dihydrotrichotetronin, with sor2 being sufficient for production of trichodimerol, but not dihydrotrichotetronin in the light. Sor1 iteratively combines three acetyl units and the growing chain is modified by the ketoacyl reductase subunit, and optional by the enoyl reductase subunit in the second cycle. The polyketide is then handed over to the PKS sor2, which adds three more acetyl units, and two methyl groups. Sor2 releases an aldehyde, which undergoes spontaneous cyclization resulting in the formation of sorbicillin or 2',3'-dihydrosorbicillin. The monooxygenase sor5 oxidizes sorbicillin and 2',3'-dihydrosorbicillin to 2',3'-dihydrosorbicillinol and sorbicillinol, respectively. The oxidoreductase sor8 further converts sorbicillinol into oxosorbicillinol. Sorbicillinol is the building block for the other sorbicillinoids such as disorbicillinol, bisvertinolon, dihydrobisvertinolone, and dihydrotrichotetronine. In Hypocrea jecorina (strain QM6a) (Trichoderma reesei), this protein is Non-reducing polyketide synthase sor2.